The sequence spans 400 residues: Phosphoglycerate kinase (400 aa).

Substrate is bound by residues 23 to 25 (DLN), Arg38, 61 to 64 (HFGR), Arg120, and Arg153. ATP-binding positions include Lys203, Glu325, and 355–358 (GGDT).

This sequence belongs to the phosphoglycerate kinase family. Monomer.

It is found in the cytoplasm. The catalysed reaction is (2R)-3-phosphoglycerate + ATP = (2R)-3-phospho-glyceroyl phosphate + ADP. It functions in the pathway carbohydrate degradation; glycolysis; pyruvate from D-glyceraldehyde 3-phosphate: step 2/5. This Methylorubrum extorquens (strain CM4 / NCIMB 13688) (Methylobacterium extorquens) protein is Phosphoglycerate kinase.